The primary structure comprises 120 residues: U15-barytoxin-Tl1c (120 aa).

The N-terminal stretch at 1–16 (MKLFMVLVASFAFAVA) is a signal peptide. 4 disulfides stabilise this stretch: Cys55–Cys73, Cys66–Cys79, Cys70–Cys118, and Cys72–Cys89.

It belongs to the neurotoxin 03 (Tx2) family. 03 subfamily. In terms of tissue distribution, expressed by the venom gland.

Its subcellular location is the secreted. Its function is as follows. Ion channel inhibitor. The polypeptide is U15-barytoxin-Tl1c (Trittame loki (Brush-footed trapdoor spider)).